Reading from the N-terminus, the 497-residue chain is MKKYWFNSMLSNKKLEQKCGLSKSMDGLDALGHTSGSEETIRKDADKKIPSWDSYSFSNIHYLNSLFDRRNLWSLISDHTFLVRNSNGDTYSVYFDIENQIFDIDNASSFLSELPSYLKSGSNNSNYYYSYYSMYDTQSNWNNHINSCIDSYLRFEISLNSDIYSDIDSYISSFICTESTSSIENCTESTSSIENGNSSIKTSSSYFNRIEKSNDFDLNTKYKQLWVQCENCYGLNYKKFFSSKMNICEYCGYHLKMSSSDRIELFIDPGTWEPMDEDMVSIDPIEFHSIDPIEFHSEEEPYIDRISFYQTKTGLTEAVQTGVGQLNSIPIAIGVMDFQFMGGSMGSVVGEKITRLIEYATNRSLPVIIVCASGGARMQEGALSLMQMAKISSASYDYQSNKKLFFVSILTSPTTGGVTASFGMLGDIIIAEPNAYIAFAGKRVIEQTLKKTVPDGLQVAEYLFHKGLFDPIVPRNPLKGVLNELFQLHGFLPLNQD.

The 273-residue stretch at 225–497 (LWVQCENCYG…LHGFLPLNQD (273 aa)) folds into the CoA carboxyltransferase N-terminal domain. 4 residues coordinate Zn(2+): cysteine 229, cysteine 232, cysteine 248, and cysteine 251. The C4-type zinc finger occupies 229 to 251 (CENCYGLNYKKFFSSKMNICEYC).

The protein belongs to the AccD/PCCB family. As to quaternary structure, acetyl-CoA carboxylase is a heterohexamer composed of biotin carboxyl carrier protein, biotin carboxylase and 2 subunits each of ACCase subunit alpha and ACCase plastid-coded subunit beta (accD). Zn(2+) serves as cofactor.

It localises to the plastid. The protein resides in the chloroplast stroma. The enzyme catalyses N(6)-carboxybiotinyl-L-lysyl-[protein] + acetyl-CoA = N(6)-biotinyl-L-lysyl-[protein] + malonyl-CoA. The protein operates within lipid metabolism; malonyl-CoA biosynthesis; malonyl-CoA from acetyl-CoA: step 1/1. Component of the acetyl coenzyme A carboxylase (ACC) complex. Biotin carboxylase (BC) catalyzes the carboxylation of biotin on its carrier protein (BCCP) and then the CO(2) group is transferred by the transcarboxylase to acetyl-CoA to form malonyl-CoA. This chain is Acetyl-coenzyme A carboxylase carboxyl transferase subunit beta, chloroplastic, found in Phalaenopsis aphrodite subsp. formosana (Moth orchid).